The chain runs to 1568 residues: Myosin-2 (1568 aa).

In terms of domain architecture, Myosin N-terminal SH3-like spans 4–57 (EVGTRCWYPHKELGWIGAEVIKNEVKDGKYHLELSLEDDEVVSVDTEDLNDDKN). The region spanning 70–783 (EATEDLTSLS…MLAYLEKLRS (714 aa)) is the Myosin motor domain. An ATP-binding site is contributed by 164–171 (GESGAGKT). The segment at 443–523 (FIGVLDIYGF…LGILSLLDEE (81 aa)) is actin-binding. The disordered stretch occupies residues 619–641 (KKAELEQNNPGNKKPGPARTVNR). IQ domains follow at residues 786-808 (MHNS…QYLK), 809-833 (ISQA…YHEM), 834-856 (KVHS…NVFN), 857-881 (VLIT…KREH), 882-904 (EYNA…TFLN), and 905-934 (TKRD…DAKS). Positions 944–1088 (KLENKVIELT…ISRLQTAMSL (145 aa)) form a coiled coil. Residues 1089–1568 (GTVTTSVLPQ…VAQQVVQDGH (480 aa)) form a non alpha-helical, tail domain region. The Dilute domain maps to 1223–1498 (AQVLTTIQKV…LRYVADIVKK (276 aa)).

It belongs to the TRAFAC class myosin-kinesin ATPase superfamily. Myosin family. In terms of assembly, homodimer. Interacts with calmodulin (CMD1) and the myosin light chain MLC1 through its IQ repeats.

Its function is as follows. Myosin heavy chain that is required for the cell cycle-regulated transport of various organelles and proteins for their segregation. Functions by binding with its tail domain to receptor proteins on organelles and exerting force with its N-terminal motor domain against actin filaments, thereby transporting its cargo along polarized actin cables. This Saccharomyces uvarum (strain ATCC 76518 / CBS 7001 / CLIB 283 / NBRC 10550 / MCYC 623 / NCYC 2669 / NRRL Y-11845) (Yeast) protein is Myosin-2 (MYO2).